Reading from the N-terminus, the 627-residue chain is E3 ubiquitin-protein ligase DTX1 (627 aa).

WWE domains follow at residues 14–94 (GLGF…PVRR) and 95–171 (NFYD…RLRR). 3 disordered regions span residues 222-254 (QRRKAPIAPAAPPAPPPPPPPLPPGGPPGALVV), 269-327 (PATG…ALPV), and 368-398 (PPVSKSDVKPVPGVPGVCRKTKKKHLKKSKN). 2 stretches are compositionally biased toward pro residues: residues 230-248 (PAAPPAPPPPPPPLPPGGP) and 275-287 (EPAPPPGVPPRSP). The SH3-binding signature appears at 240–243 (PPPL). Polar residues predominate over residues 296–314 (PGQNNLSRPGPQRSTSVSA). Basic residues predominate over residues 386 to 396 (RKTKKKHLKKS). The RING-type zinc-finger motif lies at 418–479 (CTICMERLVT…DGSLQCPTCK (62 aa)).

Belongs to the Deltex family. In terms of assembly, homodimer. May form a heterodimer with other members of the Deltex family. Interacts with NOTCH1 via its N-terminal region and EIF3F, the interaction is required for NOTCH1 deubiquitination. Interacts with EP300. Forms a heterodimer with BBAP; the heterodimerization leading to an increase of in vitro ubiquitin ligase activity. Interacts with ITCH. In terms of processing, ubiquitinated; undergoes 'Lys-29'-linked polyubiquitination catalyzed by ITCH. In terms of tissue distribution, predominantly expressed in the brain and testis. Weakly expressed in the thymus, spleen and ovary. Predominantly expressed in regions containing post-mitotic differentiating neurons.

It localises to the cytoplasm. The protein resides in the nucleus. The enzyme catalyses S-ubiquitinyl-[E2 ubiquitin-conjugating enzyme]-L-cysteine + [acceptor protein]-L-lysine = [E2 ubiquitin-conjugating enzyme]-L-cysteine + N(6)-ubiquitinyl-[acceptor protein]-L-lysine.. It participates in protein modification; protein ubiquitination. In terms of biological role, regulator of Notch signaling, a signaling pathway involved in cell-cell communications that regulates a broad spectrum of cell-fate determinations. Mainly acts as a positive regulator of Notch, but it also acts as a negative regulator, depending on the developmental and cell context. Mediates the antineural activity of Notch, possibly by inhibiting the transcriptional activation mediated by MATCH1. Involved in neurogenesis, lymphogenesis and myogenesis, and may also be involved in MZB (Marginal zone B) cell differentiation. Promotes B-cell development at the expense of T-cell development, suggesting that it can antagonize NOTCH1. Functions as an ubiquitin ligase protein in vivo, mediating ubiquitination and promoting degradation of MEKK1, suggesting that it may regulate the Notch pathway via some ubiquitin ligase activity. The protein is E3 ubiquitin-protein ligase DTX1 (Dtx1) of Mus musculus (Mouse).